A 212-amino-acid polypeptide reads, in one-letter code: Riboflavin kinase (212 aa).

The interval 1-87 is H-T-H motif-like; sequence MKKSNLDLLI…HEELSDALYR (87 aa). Residues 88–212 form a riboflavin kinase region; that stretch reads GIIIGEVVSG…DGDRIRIKTL (125 aa). 97–102 contributes to the CDP binding site; the sequence is GIGEGA. Residues Thr-124 and Asn-126 each contribute to the Mg(2+) site. Residues Thr-180 and Glu-188 each coordinate FMN. 193–196 contributes to the CDP binding site; it reads VNLR.

This sequence belongs to the archaeal riboflavin kinase family. Mg(2+) is required as a cofactor.

It carries out the reaction riboflavin + CTP = CDP + FMN + H(+). The protein operates within cofactor biosynthesis; FMN biosynthesis; FMN from riboflavin (CTP route): step 1/1. Catalyzes the CTP-dependent phosphorylation of riboflavin (vitamin B2) to form flavin mononucleotide (FMN). The chain is Riboflavin kinase (ribK) from Pyrococcus furiosus (strain ATCC 43587 / DSM 3638 / JCM 8422 / Vc1).